Consider the following 180-residue polypeptide: Large ribosomal subunit protein uL5 (180 aa).

Belongs to the universal ribosomal protein uL5 family. As to quaternary structure, part of the 50S ribosomal subunit; part of the 5S rRNA/L5/L18/L25 subcomplex. Contacts the 5S rRNA and the P site tRNA. Forms a bridge to the 30S subunit in the 70S ribosome.

This is one of the proteins that bind and probably mediate the attachment of the 5S RNA into the large ribosomal subunit, where it forms part of the central protuberance. In the 70S ribosome it contacts protein S13 of the 30S subunit (bridge B1b), connecting the 2 subunits; this bridge is implicated in subunit movement. Contacts the P site tRNA; the 5S rRNA and some of its associated proteins might help stabilize positioning of ribosome-bound tRNAs. The protein is Large ribosomal subunit protein uL5 of Ruminiclostridium cellulolyticum (strain ATCC 35319 / DSM 5812 / JCM 6584 / H10) (Clostridium cellulolyticum).